We begin with the raw amino-acid sequence, 504 residues long: Maturase K (504 aa).

This sequence belongs to the intron maturase 2 family. MatK subfamily.

The protein localises to the plastid. Its subcellular location is the chloroplast. Its function is as follows. Usually encoded in the trnK tRNA gene intron. Probably assists in splicing its own and other chloroplast group II introns. The sequence is that of Maturase K from Calyptranthes pallens (Spicewood).